The chain runs to 296 residues: 5,10-methylenetetrahydrofolate reductase (296 aa).

Glu28 acts as the Proton donor/acceptor in catalysis. Position 59 (Thr59) interacts with NADH. The FAD site is built by Tyr60, Ala62, His88, Arg118, Gly119, Asp120, Ala132, Tyr152, His156, Ala159, Asp165, Asn168, Arg171, and Lys172. Asp120 contacts (6S)-5-methyl-5,6,7,8-tetrahydrofolate. Gln183 serves as a coordination point for NADH. Positions 183, 219, and 279 each coordinate (6S)-5-methyl-5,6,7,8-tetrahydrofolate.

This sequence belongs to the methylenetetrahydrofolate reductase family. Homotetramer. It depends on FAD as a cofactor.

It carries out the reaction (6S)-5-methyl-5,6,7,8-tetrahydrofolate + NAD(+) = (6R)-5,10-methylene-5,6,7,8-tetrahydrofolate + NADH + H(+). It functions in the pathway one-carbon metabolism; tetrahydrofolate interconversion. Its pathway is amino-acid biosynthesis; L-methionine biosynthesis via de novo pathway. In terms of biological role, catalyzes the NADH-dependent reduction of 5,10-methylenetetrahydrofolate to 5-methyltetrahydrofolate. Is required to provide the methyl group necessary for methionine synthetase to convert homocysteine to methionine; the methyl group is given by 5-methyltetrahydrofolate. Can also use NADPH as the reductant, but much less effectively than NADH. In Escherichia coli (strain K12), this protein is 5,10-methylenetetrahydrofolate reductase.